The primary structure comprises 103 residues: Large ribosomal subunit protein bL21 (103 aa).

The protein belongs to the bacterial ribosomal protein bL21 family. Part of the 50S ribosomal subunit. Contacts protein L20.

Functionally, this protein binds to 23S rRNA in the presence of protein L20. The polypeptide is Large ribosomal subunit protein bL21 (Clostridium perfringens (strain ATCC 13124 / DSM 756 / JCM 1290 / NCIMB 6125 / NCTC 8237 / Type A)).